We begin with the raw amino-acid sequence, 142 residues long: ATP synthase epsilon chain (142 aa).

It belongs to the ATPase epsilon chain family. In terms of assembly, F-type ATPases have 2 components, CF(1) - the catalytic core - and CF(0) - the membrane proton channel. CF(1) has five subunits: alpha(3), beta(3), gamma(1), delta(1), epsilon(1). CF(0) has three main subunits: a, b and c.

It localises to the cell inner membrane. Its function is as follows. Produces ATP from ADP in the presence of a proton gradient across the membrane. The polypeptide is ATP synthase epsilon chain (Shewanella baltica (strain OS185)).